Reading from the N-terminus, the 343-residue chain is Protease inhibitor Egf1.5a (343 aa).

Positions 1 to 28 (MYIDTGIMSNNIFLFAFFALVGLTRIEA) are cleaved as a signal peptide. Positions 52-104 (CRENEHYNSTRIECEDECNDRNNKLCYRFQQFCWCNEGYIRNSSHICVKLEDC) constitute a TIL domain.

Belongs to the polydnaviridae EGF-like motif protein family. As to quaternary structure, interacts with host PAP1, PAP3 and SPH2.

In terms of biological role, counteracts the host humoral immune response by inhibiting the processing and the amidolytic activity of host PAP1 and PAP3. Thereby, melanization of host hemolymph, normally producing several reactive intermediates toxic for viruses, is deregulated and proper immune response cannot occur. This is Protease inhibitor Egf1.5a (O1) from Microplitis demolitor bracovirus (isolate Webb) (MdBV).